The chain runs to 502 residues: Maturase K (502 aa).

The protein belongs to the intron maturase 2 family. MatK subfamily.

The protein resides in the plastid. It is found in the chloroplast. Usually encoded in the trnK tRNA gene intron. Probably assists in splicing its own and other chloroplast group II introns. This Tilia americana (American basswood) protein is Maturase K.